The chain runs to 223 residues: Translation initiation factor 6 (223 aa).

Belongs to the eIF-6 family.

Binds to the 50S ribosomal subunit and prevents its association with the 30S ribosomal subunit to form the 70S initiation complex. This is Translation initiation factor 6 from Saccharolobus islandicus (strain M.16.27) (Sulfolobus islandicus).